The following is a 173-amino-acid chain: Inorganic pyrophosphatase (173 aa).

The substrate site is built by K29, R43, and Y55. D65, D70, and D102 together coordinate Mg(2+). Position 141 (Y141) interacts with substrate.

It belongs to the PPase family. Homohexamer. Mg(2+) is required as a cofactor.

It localises to the cytoplasm. The enzyme catalyses diphosphate + H2O = 2 phosphate + H(+). Its function is as follows. Catalyzes the hydrolysis of inorganic pyrophosphate (PPi) forming two phosphate ions. The protein is Inorganic pyrophosphatase of Rickettsia felis (strain ATCC VR-1525 / URRWXCal2) (Rickettsia azadi).